A 1147-amino-acid polypeptide reads, in one-letter code: MDFRANLQRQVKPKTVSEEERKVHSPQQVDFRSVLAKKGTPKTPVPEKAPPPKPATPDFRSVLGSKKKLPAENGSSNAEALNVKATESPKLVGNAPLSGSLKPVANAKPAETLKPVANTKPAETLKPVANAETLKPMGNAKPAESSKPVGNTKPAETLKPVGNTKPAETLKPVGNIKPAETLKPVGNIKPAETLKPVGNTKPTETLKPVANAKSAETLKPIANTKPAETLKPVGNAKPAETLKPVGNAKPAETLKPVGNAKPAETLKPVGNAKPAETLKAVANAKPAETPKPAGKEELKKEVQNDVNCKREKAGAADNEKPPASPGTAPTFKEKLQDVRVAEGEKLLLQCQVSSEPPATITWTLNGKTLKTTKFVILSQEGSLCSVSIEKALPEDRGLYKCVAKNAAPEAECSCHVTVHDAPASENAKAPEMKSRRPKSSLPPVLGTESDATVKKKPAPKTPPKAATPPQIPQFPEDQKVRAGERVELFGKVAGTQPITCTWMKFRKQIQDSEHIKVENSEAGSKLTILAARQEHCGCYTLLVENKLGSRQAQVNLTVVDKPDPPAGTPCASDIRSSSLTLSWYGSSYDGGSAVQSYSVEIWDSVDKMWTELATCRSTSFNVRDLLPDREYKFRVRAINVYGTSEPSQESELTTVGEKPEEPKDEVEEVSDDDEKEPEVDYRTVTVNTEQKVSDFYDIEERLGSGKFGQVFRLVEKKTGKIWAGKFFKAYSAKEKENIPAEIGIMNCLHHPKLVQCVDAFEEKANIVMVLEIVSGGELFERIIDEDFELTERECIKYMRQISEGVEYIHKQGIVHLDLKPENIMCVNKTGTRIKLIDFGLARRLENAGSLKVLFGTPEFVAPEVINYEPISYATDMWSIGVICYILVSGLSPFMGDNDNETLANVTSATWDFDDEAFDEISDDAKDFISNLLKKDMKNRLDCTQCLQHPWLMKDTKNMEAKKLSKDRMKKYMARRKWQKTGNAVRAIGRLSSMAMISGLSGRKSSTGSPTSPLTAERLETEEDVSQAFLEAVAEEKPHVKPYFSKTIRDLEVVEGSAARFDCKIEGYPDPEVVWFKDDQSIRESRHFQIDYDEDGNCSLIISDVCGDDDAKYTCKAVNSLGEATCTAELIVETMEEGEGEGEEEEEE.

An actin-binding region spans residues 1–41; that stretch reads MDFRANLQRQVKPKTVSEEERKVHSPQQVDFRSVLAKKGTP. The interval 1–330 is disordered; that stretch reads MDFRANLQRQ…PPASPGTAPT (330 aa). Residues 26-41 are calmodulin-binding; the sequence is PQQVDFRSVLAKKGTP. Over residues 43–55 the composition is skewed to pro residues; the sequence is TPVPEKAPPPKPA. 2 tandem repeats follow at residues 100 to 111 and 112 to 123. The 16 X 12 AA tandem repeats stretch occupies residues 100-288; that stretch reads SLKPVANAKP…KAVANAKPAE (189 aa). Residues 124–132 form a 3; truncated repeat; the sequence is TLKPVANAE. A run of 13 repeats spans residues 133 to 144, 145 to 156, 157 to 168, 169 to 180, 181 to 192, 193 to 204, 205 to 216, 217 to 228, 229 to 240, 241 to 252, 253 to 264, 265 to 276, and 277 to 288. Residues 292–692 are actin-binding (calcium/calmodulin-insensitive); the sequence is PAGKEELKKE…TVTVNTEQKV (401 aa). The segment covering 293–320 has biased composition (basic and acidic residues); the sequence is AGKEELKKEVQNDVNCKREKAGAADNEK. Ig-like C2-type domains are found at residues 329 to 417 and 469 to 557; these read PTFK…CHVT and PQIP…VNLT. An intrachain disulfide couples C350 to C401. Disordered regions lie at residues 424-476 and 644-678; these read SENA…QFPE and SEPS…KEPE. Pro residues predominate over residues 459-472; that stretch reads PKTPPKAATPPQIP. Residues 565–657 enclose the Fibronectin type-III domain; it reads PAGTPCASDI…QESELTTVGE (93 aa). Polar residues predominate over residues 644-653; the sequence is SEPSQESELT. Over residues 662 to 677 the composition is skewed to acidic residues; sequence PKDEVEEVSDDDEKEP. S670 is modified (phosphoserine). The residue at position 681 (Y681) is a Phosphotyrosine; by ABL1. One can recognise a Protein kinase domain in the interval 696-951; that stretch reads YDIEERLGSG…CTQCLQHPWL (256 aa). ATP is bound by residues 702–710 and K725; that span reads LGSGKFGQV. The residue at position 807 (Y807) is a Phosphotyrosine; by ABL1. The Proton acceptor role is filled by D817. Y867 carries the phosphotyrosine; by ABL1 modification. The calmodulin-binding stretch occupies residues 943-1006; it reads TQCLQHPWLM…SGLSGRKSST (64 aa). A phosphoserine mark is found at S991, S992, S1004, S1005, and S1008. Residues 999 to 1019 are disordered; that stretch reads LSGRKSSTGSPTSPLTAERLE. Residues 1002–1013 are compositionally biased toward polar residues; it reads RKSSTGSPTSPL. T1010 bears the Phosphothreonine mark. S1011 carries the post-translational modification Phosphoserine. Residues 1041–1130 form the Ig-like C2-type 3 domain; sequence PYFSKTIRDL…GEATCTAELI (90 aa). C1062 and C1114 are joined by a disulfide.

Belongs to the protein kinase superfamily. CAMK Ser/Thr protein kinase family. As to quaternary structure, all isoforms including Telokin bind calmodulin. Interacts with SVIL. Interacts with CTTN; this interaction is reduced during thrombin-induced endothelial cell (EC) contraction but is promoted by the barrier-protective agonist sphingosine 1-phosphate (S1P) within lamellipodia. A complex made of ABL1, CTTN and MYLK regulates cortical actin-based cytoskeletal rearrangement critical to sphingosine 1-phosphate (S1P)-mediated endothelial cell (EC) barrier enhancement. Binds to NAA10/ARD1 and PTK2B/PYK2. Mg(2+) is required as a cofactor. The cofactor is Ca(2+). The C-terminus is deglutamylated by AGTPBP1/CCP1, AGBL1/CCP4 and AGBL4/CCP6, leading to the formation of Myosin light chain kinase, smooth muscle, deglutamylated form. The consequences of C-terminal deglutamylation are unknown. Post-translationally, can probably be down-regulated by phosphorylation. Tyrosine phosphorylation by ABL1 increases kinase activity, reverses MLCK-mediated inhibition of Arp2/3-mediated actin polymerization, and enhances CTTN-binding. Phosphorylation by SRC promotes CTTN binding. In terms of tissue distribution, isoform Telokin is found in all smooth muscle tested except the aorta. It is not present in non-muscle tissue.

Its subcellular location is the cytoplasm. The protein resides in the cell projection. It is found in the lamellipodium. The protein localises to the cleavage furrow. It localises to the cytoskeleton. Its subcellular location is the stress fiber. The enzyme catalyses L-seryl-[myosin light chain] + ATP = O-phospho-L-seryl-[myosin light chain] + ADP + H(+). The catalysed reaction is L-threonyl-[myosin light chain] + ATP = O-phospho-L-threonyl-[myosin light chain] + ADP + H(+). With respect to regulation, all catalytically active isoforms require binding to calcium and calmodulin for activation. Calcium/calmodulin-dependent myosin light chain kinase implicated in smooth muscle contraction via phosphorylation of myosin light chains (MLC). Also regulates actin-myosin interaction through a non-kinase activity. Phosphorylates PTK2B/PYK2 and myosin light-chains. Involved in the inflammatory response (e.g. apoptosis, vascular permeability, leukocyte diapedesis), cell motility and morphology, airway hyperreactivity and other activities relevant to asthma. Required for tonic airway smooth muscle contraction that is necessary for physiological and asthmatic airway resistance. Necessary for gastrointestinal motility. Implicated in the regulation of endothelial as well as vascular permeability, probably via the regulation of cytoskeletal rearrangements. In the nervous system it has been shown to control the growth initiation of astrocytic processes in culture and to participate in transmitter release at synapses formed between cultured sympathetic ganglion cells. Critical participant in signaling sequences that result in fibroblast apoptosis. Plays a role in the regulation of epithelial cell survival. Required for epithelial wound healing, especially during actomyosin ring contraction during purse-string wound closure. Mediates RhoA-dependent membrane blebbing. Triggers TRPC5 channel activity in a calcium-dependent signaling, by inducing its subcellular localization at the plasma membrane. Promotes cell migration (including tumor cells) and tumor metastasis. PTK2B/PYK2 activation by phosphorylation mediates ITGB2 activation and is thus essential to trigger neutrophil transmigration during acute lung injury (ALI). May regulate optic nerve head astrocyte migration. Probably involved in mitotic cytoskeletal regulation. Regulates tight junction probably by modulating ZO-1 exchange in the perijunctional actomyosin ring. Mediates burn-induced microvascular barrier injury; triggers endothelial contraction in the development of microvascular hyperpermeability by phosphorylating MLC. Essential for intestinal barrier dysfunction. Mediates Giardia spp.-mediated reduced epithelial barrier function during giardiasis intestinal infection via reorganization of cytoskeletal F-actin and tight junctional ZO-1. Necessary for hypotonicity-induced Ca(2+) entry and subsequent activation of volume-sensitive organic osmolyte/anion channels (VSOAC) in cervical cancer cells. This chain is Myosin light chain kinase, smooth muscle (MYLK), found in Oryctolagus cuniculus (Rabbit).